We begin with the raw amino-acid sequence, 356 residues long: Tyrosine recombinase XerS (356 aa).

The 106-residue stretch at 16 to 121 folds into the Core-binding (CB) domain; sequence VMPPYVLEYY…ALSSLYKYLT (106 aa). The Tyr recombinase domain maps to 169 to 354; the sequence is GFLDYIDSEY…INEEQKNALD (186 aa). Catalysis depends on residues Arg210, Lys234, His306, Arg309, and His332. Tyr341 (O-(3'-phospho-DNA)-tyrosine intermediate) is an active-site residue.

This sequence belongs to the 'phage' integrase family. XerS subfamily.

Its subcellular location is the cytoplasm. FtsK is required for recombination. In terms of biological role, site-specific tyrosine recombinase, which acts by catalyzing the cutting and rejoining of the recombining DNA molecules. Essential to convert dimers of the bacterial chromosome into monomers to permit their segregation at cell division. Binds an atypical recombination dif site (difSL). Binds preferentially to the left arm and cooperatively to the right arm of difSL. This is Tyrosine recombinase XerS from Lactococcus lactis subsp. cremoris (strain MG1363).